Here is a 99-residue protein sequence, read N- to C-terminus: Protein S100-Z (99 aa).

EF-hand domains are found at residues 13 to 48 (ITVF…FLMS) and 50 to 85 (KDPM…LTVA). Ca(2+)-binding residues include serine 20, glutamate 23, aspartate 25, lysine 28, glutamate 33, aspartate 63, asparagine 65, aspartate 67, glutamate 69, and glutamate 74.

Belongs to the S-100 family. As to quaternary structure, homodimer. Homodimers may assemble into larger stable oligomers. In larva at 5 days post-fertilization, shows very restricted expression only in a few large cells of the olfactory placode. More widely expressed in the adult. Expressed at higher levels in gut than in spleen, head kidney and gill.

The chain is Protein S100-Z from Danio rerio (Zebrafish).